A 1940-amino-acid chain; its full sequence is MSSDAEMAIFGEAAPYLRKPEKERIEAQNRPFDSKKACFAMDDKEMYVKGMIQSRENDKVTVKTLDDRTLTLNSDQVFPMNPPKFDKIEDMAMMTHLHEPAVLYNLKERYAAWMIYTYSGLFCVTVNPYKWLPVYNPEVVTAYRGKKRQEAPPHIFSISDNAYQFMLTDRDNQSILITGESGAGKTVNTKRVIQYFATIAVTGEKKKEQQPGKMQGTLEDQIIQANPLLEAFGNAKTVRNDNSSRFGKFIRIHFGATGKLASADIETYLLEKSRVTFQLSSERSYHIFYQILSNKKPELIDLLLISTNPFDFPFVSQGEVTVASINDSEELLATDNAIDILGFSSEEKVGIYKLTGAVMHYGNMKFKQKQREEQAEPDGTEVADKAGYLMGLNSAEMLKGLCCPRVKVGNEYVTKGQNVQQVTNSVGALAKAVYEKMFLWMVTRINQQLDTKQPRQYFIGVLDIAGFEIFDFNSLEQLCINFTNEKLQQFFNHHMFVLEQEEYKKEGIEWEFIDFGMDLAACIELIEKPMGIFSILEEECMFPKATDTSFKNKLYDQHLGKSNNFQKPKPAKGKAEAHFSLVHYAGTVDYNIAGWLDKNKDPLNETVVGLYQKSSLKLLSFLFSNYAGAEAGDSGGSKKGGKKKGSSFQTVSAVFRENLNKLMTNLRSTHPHFVRCLIPNETKTPGVMDHYLVMHQLRCNGVLEGIRICRKGFPSRILYADFKQRYRILNASAIPEGQFIDSKNASEKLLSSIDVDREQYRFGHTKVFFKAGLLGLLEEMRDEKLVTLMTRTQAICRGYLMRVEFKKMMERRESIFCIQYNIRSFMNVKHWPWMNLFFKIKPLLKSAEAEREMATMKEDFERAKEELARSEARRKELEEKMVSLLQEKNDLQLQVQSETENLIDAEERCEGLIKSKIQLEAKVKELNERLEEEEEVNSDLVAKKRSLEDKCSSLKRDIDDLELTLTKVEKEKHATENKVKNLSEEMTALEENISKLTKEKKSLQEAHQQALDDLQVEEDKVNGLIKINVKLEQQTDDLEGSLEQEKKLRADLERIKKKLEGDLKLSQESIMDLENDKQQVEEKLKKKEFEISQLQTKIDDEQVHSLQLQKKIKELQARIEELEEEIEAERASRAKAEKQRSDLSRELEEISERLEEASGVTSAQVEMNKKREAEFQKLRRDLEEATLQHEATTAALRKKHADSVAELGEQIDNLQRVKQKLEKEKSELKMEIDDLASNIETVSKSKSNVERMCRTVEDQFNEIKAKDDQQTQLIHDLNMQKARLQTQNGELSHQLEEKESLISQLTKGKQALTQQLEELKRQLEEETKAKNALAHALQSSRHDCDLLREQYEEEQEGKAELQRALSKANSEVAQWRTKYETDAIQRTEELEEAKKKLAQRLQEAEENTEAVSSKCASLEKTKQRLQGEVDDLMLDLERTSTARAILDRKQRDLDKVLAEWKQKLDGSQAELEAAQKGSRSLSTEIFKMQNAYEEVVDQLETLRRENKNLQEEISDLTEQIAETGKHLQEVEKSKKQVEQEKSDLQVALEEVEASGSLEHEESKILRVQLELSQVKSELDRRVTEKDEEIEQLKRNSQRAAEAMQSMLDAEIRSRNDALRLKKKMEGDLNELEIQLGHSSRQVAETQKHLRTVQGQLKDSQLHLDDALRSNEDLKEQLAIVERRNGLLLEELEEMKAALEQTERTRRLSEQELLDASDRVQLLHSQNTSLINTKKKLEVDIAQCQAEVENSLQESRNAEEKAKKAITDAAMMAEELKKEQDTSAHLERMKKNLEQTVKDLQHRLDEAEQLALKGGKKQIQKLEARVRELESELDAEQKRGAEALKGAHKYERKVKELTYQAEEDRKNILRLQDLVDKLQAKVKAYKRQAEEAEEQANTQMSKCRRVQHELEEAEERADIAESQVNKLRAKSRDVGAQKMEE.

Residues 33 to 82 (DSKKACFAMDDKEMYVKGMIQSRENDKVTVKTLDDRTLTLNSDQVFPMNP) enclose the Myosin N-terminal SH3-like domain. One can recognise a Myosin motor domain in the interval 86 to 782 (DKIEDMAMMT…LLGLLEEMRD (697 aa)). Residue Lys130 is modified to N6,N6,N6-trimethyllysine. 179–186 (GESGAGKT) provides a ligand contact to ATP. Actin-binding stretches follow at residues 659–681 (LNKL…IPNE) and 761–775 (RFGH…GLLG). In terms of domain architecture, IQ spans 785 to 814 (LVTLMTRTQAICRGYLMRVEFKKMMERRES). Residues 843 to 1940 (LLKSAEAERE…RDVGAQKMEE (1098 aa)) are a coiled coil. A disordered region spans residues 1886-1940 (RQAEEAEEQANTQMSKCRRVQHELEEAEERADIAESQVNKLRAKSRDVGAQKMEE). Basic and acidic residues predominate over residues 1929 to 1940 (KSRDVGAQKMEE).

The protein belongs to the TRAFAC class myosin-kinesin ATPase superfamily. Myosin family. Muscle myosin is a hexameric protein that consists of 2 heavy chain subunits (MHC), 2 alkali light chain subunits (MLC) and 2 regulatory light chain subunits (MLC-2).

The protein localises to the cytoplasm. It localises to the myofibril. In terms of biological role, fast twitching myosin mediating the high-velocity and low-tension contractions of specific striated muscles. This chain is Myosin-13 (MYH13), found in Canis lupus familiaris (Dog).